The sequence spans 326 residues: Vitamin B12 import system permease protein BtuC (326 aa).

9 consecutive transmembrane segments (helical) span residues 15–35, 61–81, 88–108, 112–132, 146–166, 184–204, 240–260, 274–294, and 302–322; these read WLLC…CAGE, LAVL…QALF, PGLL…VLLG, LPNW…TLIL, LLAG…AIYF, GGVD…LLWI, GWMV…GLVI, VLLP…DVVA, and ELPI…WLLL.

Belongs to the binding-protein-dependent transport system permease family. FecCD subfamily. As to quaternary structure, the complex is composed of two ATP-binding proteins (BtuD), two transmembrane proteins (BtuC) and a solute-binding protein (BtuF).

The protein resides in the cell inner membrane. In terms of biological role, part of the ABC transporter complex BtuCDF involved in vitamin B12 import. Involved in the translocation of the substrate across the membrane. The polypeptide is Vitamin B12 import system permease protein BtuC (Escherichia coli O17:K52:H18 (strain UMN026 / ExPEC)).